Reading from the N-terminus, the 235-residue chain is UPF0758 protein COPRO5265_1522 (235 aa).

The MPN domain occupies 109–235 (RITTPEDAIE…HVSLAREKLI (127 aa)). 3 residues coordinate Zn(2+): His184, His186, and Asp197. The short motif at 184 to 197 (HNHPSGDPSPSRED) is the JAMM motif element.

It belongs to the UPF0758 family.

In Coprothermobacter proteolyticus (strain ATCC 35245 / DSM 5265 / OCM 4 / BT), this protein is UPF0758 protein COPRO5265_1522.